A 217-amino-acid chain; its full sequence is Mitochondrial inner membrane protease ATP23 (217 aa).

Positions M1–C21 are disordered. The span at R7–C21 shows a compositional bias: basic and acidic residues. H118 contacts a divalent metal cation. E119 is an active-site residue. Position 122 (H122) interacts with a divalent metal cation.

This sequence belongs to the peptidase M76 family.

Its subcellular location is the mitochondrion inner membrane. Functionally, has a dual role in the assembly of mitochondrial ATPase. Acts as a protease that removes N-terminal residues of mitochondrial ATPase CF(0) subunit 6 at the intermembrane space side. Also involved in the correct assembly of the membrane-embedded ATPase CF(0) particle, probably mediating association of subunit 6 with the subunit 9 ring. The chain is Mitochondrial inner membrane protease ATP23 (ATP23) from Mycosarcoma maydis (Corn smut fungus).